The following is a 50-amino-acid chain: C-C motif chemokine 5 (50 aa).

Belongs to the intercrine beta (chemokine CC) family.

The protein resides in the secreted. In terms of biological role, chemoattractant for blood monocytes, memory T-helper cells and eosinophils. Causes the release of histamine from basophils and activates eosinophils. May activate several chemokine receptors including CCR1, CCR3, CCR4 and CCR5. May also be an agonist of the G protein-coupled receptor GPR75. Together with GPR75, may play a role in neuron survival through activation of a downstream signaling pathway involving the PI3, Akt and MAP kinases. By activating GPR75 may also play a role in insulin secretion by islet cells. In Sus scrofa (Pig), this protein is C-C motif chemokine 5 (CCL5).